Here is a 208-residue protein sequence, read N- to C-terminus: Small ribosomal subunit protein uS5 (208 aa).

Residues 28-91 form the S5 DRBM domain; that stretch reads LEERLIYANR…EKAKKNVIRV (64 aa).

This sequence belongs to the universal ribosomal protein uS5 family. Part of the 30S ribosomal subunit. Contacts proteins S4 and S8.

Functionally, with S4 and S12 plays an important role in translational accuracy. Located at the back of the 30S subunit body where it stabilizes the conformation of the head with respect to the body. This chain is Small ribosomal subunit protein uS5, found in Aquifex aeolicus (strain VF5).